Reading from the N-terminus, the 258-residue chain is Large ribosomal subunit protein uL15c (258 aa).

The transit peptide at 1 to 65 (MSAASLIPVS…NVKSSGENVR (65 aa)) directs the protein to the chloroplast. The disordered stretch occupies residues 67–90 (RLDNLGPQPGSRKRPKRKGRGIAA). Over residues 77 to 86 (SRKRPKRKGR) the composition is skewed to basic residues.

This sequence belongs to the universal ribosomal protein uL15 family. Part of the 50S ribosomal subunit.

The protein localises to the plastid. The protein resides in the chloroplast. The polypeptide is Large ribosomal subunit protein uL15c (RPL15) (Pisum sativum (Garden pea)).